A 2345-amino-acid polypeptide reads, in one-letter code: Acetyl-CoA carboxylase 1 (2345 aa).

The residue at position 1 (methionine 1) is an N-acetylmethionine. Residues serine 5, serine 23, serine 25, serine 29, serine 34, serine 47, serine 49, and serine 52 each carry the phosphoserine modification. At threonine 57 the chain carries Phosphothreonine. Serine 77 and serine 79 each carry phosphoserine. Phosphoserine; by AMPK is present on serine 79. The Biotin carboxylation domain occupies 116 to 617; sequence VIEKVLIANN…DTGWLDRLIA (502 aa). Positions 274–465 constitute an ATP-grasp domain; it reads SKRILNVPQD…LPAAQLQIAM (192 aa). Position 300–357 (300–357) interacts with ATP; it reads AEEVGYPVMIKASEGGGGKGIRKVNNADDFPNLFRQVQAEVPGSPIFVMRLAKQSRHL. Residues glutamate 423, glutamate 436, and asparagine 438 each contribute to the Mg(2+) site. Mn(2+) is bound by residues glutamate 423, glutamate 436, and asparagine 438. Arginine 440 is a catalytic residue. Threonine 609 bears the Phosphothreonine mark. A Biotinyl-binding domain is found at 744-818; the sequence is FEKENDPSVM…DPGCVIAKMQ (75 aa). Lysine 785 bears the N6-biotinyllysine mark. Serine 834, serine 1200, serine 1215, and serine 1217 each carry phosphoserine. A Phosphothreonine modification is found at threonine 1226. Phosphoserine occurs at positions 1258, 1262, and 1272. An N6-acetyllysine modification is found at lysine 1333. Residues 1575–1913 form the CoA carboxyltransferase N-terminal domain; the sequence is PYVTKDLLQS…SVHSSVPLLN (339 aa). Residues 1575-2233 form a carboxyltransferase region; it reads PYVTKDLLQS…EDLVKKKIHN (659 aa). Residues arginine 1822, lysine 2126, and arginine 2128 each contribute to the CoA site. The 317-residue stretch at 1917–2233 folds into the CoA carboxyltransferase C-terminal domain; that stretch reads PIDRIIEFVP…EDLVKKKIHN (317 aa). Threonine 2152 carries the post-translational modification Phosphothreonine.

In terms of assembly, monomer, homodimer, and homotetramer. Can form filamentous polymers. Interacts in its inactive phosphorylated form with the BRCT domains of BRCA1 which prevents ACACA dephosphorylation and inhibits lipid synthesis. Interacts with MID1IP1; interaction with MID1IP1 promotes oligomerization and increases its activity. Mg(2+) serves as cofactor. The cofactor is Mn(2+). It depends on biotin as a cofactor. Phosphorylation on Ser-1262 is required for interaction with BRCA1. In terms of processing, phosphorylation at Ser-79 by AMPK inactivates enzyme activity. Post-translationally, the biotin cofactor is covalently attached to the central biotinyl-binding domain and is required for the catalytic activity.

The protein resides in the cytoplasm. It is found in the cytosol. The enzyme catalyses hydrogencarbonate + acetyl-CoA + ATP = malonyl-CoA + ADP + phosphate + H(+). It participates in lipid metabolism; malonyl-CoA biosynthesis; malonyl-CoA from acetyl-CoA: step 1/1. With respect to regulation, inhibited by phosphorylation. Citrate promotes oligomerization of the protein into filaments that correspond to the most active form of the carboxylase. Functionally, cytosolic enzyme that catalyzes the carboxylation of acetyl-CoA to malonyl-CoA, the first and rate-limiting step of de novo fatty acid biosynthesis. This is a 2 steps reaction starting with the ATP-dependent carboxylation of the biotin carried by the biotin carboxyl carrier (BCC) domain followed by the transfer of the carboxyl group from carboxylated biotin to acetyl-CoA. The sequence is that of Acetyl-CoA carboxylase 1 from Mus musculus (Mouse).